Consider the following 259-residue polypeptide: Kallikrein 1-related peptidase b22 (259 aa).

A signal peptide spans 1–17 (MRFLILFLTLSLGGIDA). A propeptide spans 18-24 (APPVQSR) (activation peptide). Residues 25–256 (ILGGFKCEKN…FTSWIKDTMA (232 aa)) enclose the Peptidase S1 domain. 5 disulfides stabilise this stretch: Cys-31/Cys-171, Cys-50/Cys-66, Cys-150/Cys-217, Cys-182/Cys-196, and Cys-207/Cys-232. His-65 (charge relay system) is an active-site residue. Asn-102 carries N-linked (GlcNAc...) asparagine glycosylation. The active-site Charge relay system is Asp-118. Ser-211 functions as the Charge relay system in the catalytic mechanism.

Belongs to the peptidase S1 family. Kallikrein subfamily.

The enzyme catalyses Preferential cleavage of Arg-|-Xaa bonds in small molecule substrates. Highly selective action to release kallidin (lysyl-bradykinin) from kininogen involves hydrolysis of Met-|-Xaa or Leu-|-Xaa.. Functionally, glandular kallikreins cleave Met-Lys and Arg-Ser bonds in kininogen to release Lys-bradykinin. This is Kallikrein 1-related peptidase b22 (Klk1b22) from Mus musculus (Mouse).